The following is a 358-amino-acid chain: Probable branched-chain-amino-acid aminotransferase (358 aa).

N6-(pyridoxal phosphate)lysine is present on Lys-196.

Belongs to the class-IV pyridoxal-phosphate-dependent aminotransferase family. Requires pyridoxal 5'-phosphate as cofactor.

The catalysed reaction is L-leucine + 2-oxoglutarate = 4-methyl-2-oxopentanoate + L-glutamate. The enzyme catalyses L-isoleucine + 2-oxoglutarate = (S)-3-methyl-2-oxopentanoate + L-glutamate. It carries out the reaction L-valine + 2-oxoglutarate = 3-methyl-2-oxobutanoate + L-glutamate. It participates in amino-acid biosynthesis; L-isoleucine biosynthesis; L-isoleucine from 2-oxobutanoate: step 4/4. Its pathway is amino-acid biosynthesis; L-leucine biosynthesis; L-leucine from 3-methyl-2-oxobutanoate: step 4/4. The protein operates within amino-acid biosynthesis; L-valine biosynthesis; L-valine from pyruvate: step 4/4. Functionally, acts on leucine, isoleucine and valine. The chain is Probable branched-chain-amino-acid aminotransferase (ilvE) from Staphylococcus aureus (strain N315).